Reading from the N-terminus, the 637-residue chain is 1-deoxy-D-xylulose-5-phosphate synthase (637 aa).

Thiamine diphosphate-binding positions include His-72 and 113-115 (GHA). Position 144 (Asp-144) interacts with Mg(2+). Residues 145–146 (GA), Asn-174, Tyr-287, and Glu-370 contribute to the thiamine diphosphate site. Mg(2+) is bound at residue Asn-174.

This sequence belongs to the transketolase family. DXPS subfamily. Homodimer. It depends on Mg(2+) as a cofactor. Requires thiamine diphosphate as cofactor.

The enzyme catalyses D-glyceraldehyde 3-phosphate + pyruvate + H(+) = 1-deoxy-D-xylulose 5-phosphate + CO2. The protein operates within metabolic intermediate biosynthesis; 1-deoxy-D-xylulose 5-phosphate biosynthesis; 1-deoxy-D-xylulose 5-phosphate from D-glyceraldehyde 3-phosphate and pyruvate: step 1/1. In terms of biological role, catalyzes the acyloin condensation reaction between C atoms 2 and 3 of pyruvate and glyceraldehyde 3-phosphate to yield 1-deoxy-D-xylulose-5-phosphate (DXP). The chain is 1-deoxy-D-xylulose-5-phosphate synthase from Prochlorococcus marinus subsp. pastoris (strain CCMP1986 / NIES-2087 / MED4).